Here is a 652-residue protein sequence, read N- to C-terminus: Carboxypeptidase Z (652 aa).

The signal sequence occupies residues 1 to 20 (MPTTPLLLAALAALAALAVA). The region spanning 41-163 (THSATCVDLH…APEEEGCYDP (123 aa)) is the FZ domain. 5 disulfide bridges follow: cysteine 46-cysteine 112, cysteine 54-cysteine 105, cysteine 96-cysteine 132, cysteine 121-cysteine 160, and cysteine 125-cysteine 149. Asparagine 60 carries an N-linked (GlcNAc...) asparagine glycan. A Peptidase M14 domain is found at 189–505 (AHHSYAQMVR…EPLLNFLEMV (317 aa)). The Zn(2+) site is built by histidine 251 and glutamate 254. Asparagine 284 is a glycosylation site (N-linked (GlcNAc...) asparagine). Histidine 383 is a Zn(2+) binding site. Residue glutamate 475 is the Proton donor/acceptor of the active site. Positions 594–628 (FLPGPSRALPRSLDPQGAPAQLDFEPPRARRQPAS) are disordered.

This sequence belongs to the peptidase M14 family. The cofactor is Zn(2+). Abundantly expressed in the placenta, with low to moderate levels in the brain, lung, thymus and kidney.

The protein resides in the secreted. It is found in the extracellular space. The protein localises to the extracellular matrix. With respect to regulation, inhibited by 2-mercaptomethyl-3-guanidinoethylthiopropanoic acid (MGTA) and guanidinoethylmercaptosuccinic acid (GEMSA). Inhibited by chelating agents such as EDTA and EGTA. In terms of biological role, cleaves substrates with C-terminal arginine residues. Probably modulates the Wnt signaling pathway, by cleaving some undefined protein. May play a role in cleavage during prohormone processing. This chain is Carboxypeptidase Z (Cpz), found in Rattus norvegicus (Rat).